The sequence spans 204 residues: Translation initiation factor 2 subunit beta (204 aa).

Residues 146–204 (NLEEGQVLDVEIQSLSKRGDGVVKMGRYIMYVSNAKPGQSVKIKISRISGSIVFTERAE) enclose the TRAM domain.

It belongs to the eIF-2-beta/eIF-5 family. Heterotrimer composed of an alpha, a beta and a gamma chain.

Functionally, eIF-2 functions in the early steps of protein synthesis by forming a ternary complex with GTP and initiator tRNA. The protein is Translation initiation factor 2 subunit beta of Methanoregula boonei (strain DSM 21154 / JCM 14090 / 6A8).